The chain runs to 203 residues: MRGTLYIVAAPSGAGKSSIVNATLARDPKIALSISFTSRAPRPGERHSEHYHFVSAEEFQGMIAAGDFFEYALVHGDWKGTARQSVEPQLAAGHDVLLEIDWQGARQVRQKVPDAVSVFILPPSRQALDERMRKRGQDSEDVMAQRLAAAREEMLHFEEFDYVIINETFDTAVSEMCAIFTASRLRRQAQQQRHAGLIQALLD.

Positions 3–181 (GTLYIVAAPS…AVSEMCAIFT (179 aa)) constitute a Guanylate kinase-like domain. 10-17 (APSGAGKS) serves as a coordination point for ATP.

The protein belongs to the guanylate kinase family.

It localises to the cytoplasm. The enzyme catalyses GMP + ATP = GDP + ADP. In terms of biological role, essential for recycling GMP and indirectly, cGMP. The polypeptide is Guanylate kinase (Xanthomonas oryzae pv. oryzae (strain MAFF 311018)).